Reading from the N-terminus, the 485-residue chain is Cysteine--tRNA ligase (485 aa).

Cys27 serves as a coordination point for Zn(2+). The short motif at 29–39 (ITAYDLCHIGH) is the 'HIGH' region element. 3 residues coordinate Zn(2+): Cys208, His233, and Glu237. The 'KMSKS' region signature appears at 265 to 269 (KMSKS). Lys268 is a binding site for ATP.

Belongs to the class-I aminoacyl-tRNA synthetase family. In terms of assembly, monomer. Zn(2+) is required as a cofactor.

It is found in the cytoplasm. It catalyses the reaction tRNA(Cys) + L-cysteine + ATP = L-cysteinyl-tRNA(Cys) + AMP + diphosphate. The protein is Cysteine--tRNA ligase of Nitratidesulfovibrio vulgaris (strain ATCC 29579 / DSM 644 / CCUG 34227 / NCIMB 8303 / VKM B-1760 / Hildenborough) (Desulfovibrio vulgaris).